Reading from the N-terminus, the 393-residue chain is Prokineticin receptor 1 (393 aa).

At 1–62 (METTVGTLGE…TNSRTFFAAK (62 aa)) the chain is on the extracellular side. A glycan (N-linked (GlcNAc...) asparagine) is linked at N11. The helical transmembrane segment at 63-83 (IVIGMALVGIMLVCGIGNFIF) threads the bilayer. Residues 84-98 (ITALARYKKLRNLTN) lie on the Cytoplasmic side of the membrane. Residues 99–119 (LLIANLAISDFLVAIVCCPFE) form a helical membrane-spanning segment. Residues 120-145 (MDYYVVRQLSWEHGHVLCASVNYLRT) are Extracellular-facing. A disulfide bridge links C137 with C217. A helical membrane pass occupies residues 146 to 166 (VSLYVSTNALLAIAIDRYLAI). Topologically, residues 167 to 179 (VHPLRPRMKCQTA) are cytoplasmic. Residues 180 to 200 (AGLIFLVWSVSILIAIPAAYF) traverse the membrane as a helical segment. Over 201–232 (TTETVLVIVESQEKIFCGQIWPVDQQFYYRSY) the chain is Extracellular. The chain crosses the membrane as a helical span at residues 233-253 (FLLVFGLEFVGPVIAMTLCYA). The Cytoplasmic portion of the chain corresponds to 254 to 282 (RVSRELWFKAVPGFQTEQIRRRLRCRRRT). A helical membrane pass occupies residues 283 to 303 (VLGLVCVLSAYVLCWAPFYGF). Over 304-322 (TIVRDFFPSVFVKEKHYLT) the chain is Extracellular. Residues 323-343 (AFYVVECIAMSNSMINTLCFV) traverse the membrane as a helical segment. Topologically, residues 344–393 (TVRNNTSKYLKRILRLQWRASPSGSKASADLDLRTTGIPATEEVDCIRLK) are cytoplasmic.

The protein belongs to the G-protein coupled receptor 1 family. As to expression, widely expressed in peripheral tissues with the highest level in the spleen and moderate levels in the adipose tissues, thymus, lung, kidney, testis, uterus and small intestine.

It localises to the cell membrane. In terms of biological role, receptor for prokineticin 1. Exclusively coupled to the G(q) subclass of heteromeric G proteins. Activation leads to mobilization of calcium, stimulation of phosphoinositide turnover and activation of p44/p42 mitogen-activated protein kinase. May play a role during early pregnancy. The sequence is that of Prokineticin receptor 1 (Prokr1) from Rattus norvegicus (Rat).